We begin with the raw amino-acid sequence, 1556 residues long: Ubiquitin carboxyl-terminal hydrolase 47 (1556 aa).

The interval 117–231 is disordered; it reads MKSDGEKAKS…AKKTAKVTSK (115 aa). A compositionally biased stretch (low complexity) spans 146–156; that stretch reads ASGSSSPSKAK. 2 positions are modified to phosphoserine: S172 and S173. Low complexity predominate over residues 180–189; sequence IKTTAAKISK. A compositionally biased stretch (basic and acidic residues) spans 191-200; sequence GSEKAPRASP. A compositionally biased stretch (polar residues) spans 208 to 219; it reads TEINSKNTSSES. S238 carries the post-translational modification Phosphoserine. Residues 396-779 enclose the USP domain; it reads VGLVNQAMTC…NAYMLMYRQV (384 aa). C405 (nucleophile) is an active-site residue. 2 stretches are compositionally biased toward polar residues: residues 628 to 642 and 661 to 673; these read NRSG…QLNG and LSSG…SSSQ. The disordered stretch occupies residues 628-697; it reads NRSGNSGEQN…SSSTSKSAKQ (70 aa). Positions 688-697 are enriched in low complexity; sequence SSSTSKSAKQ. Residue H720 is the Proton acceptor of the active site. Residues 1087–1148 form a disordered region; it reads EPMSQPSPSH…LSSPEDEAAS (62 aa). Basic and acidic residues predominate over residues 1109-1125; the sequence is DGDRTLVETDNMAHRGG. Positions 1128 to 1141 are enriched in low complexity; that stretch reads SQVSSTSHSPQLSS. Phosphoserine is present on residues S1131, S1132, S1140, S1141, S1199, S1201, and S1205.

It belongs to the peptidase C19 family. Interacts with ttk.

The protein localises to the nucleus. It carries out the reaction Thiol-dependent hydrolysis of ester, thioester, amide, peptide and isopeptide bonds formed by the C-terminal Gly of ubiquitin (a 76-residue protein attached to proteins as an intracellular targeting signal).. Functionally, ubiquitin-specific protease that deubiquitinates target proteins to regulate different cellular and developmental pathways. Functions downstream of Dsor1/MEK to positively regulate the Ras/MAPK signaling pathway. Likely to modulate the pathway during various cellular and developmental processes including rl/MAPK activation by the receptors InR, Egfr and sevenless/sev. Functions in the post-translational stabilization of rl/MAPK levels in a mechanism that is independent of rl activity and opposes the activity of the E2 enzyme Unc6 and the putative E3 ligases poe, Ufd4 and Kcmf1, which mediate the ubiquitination and proteasomal degradation of rl. During eye development it may also act downstream of rl/MAPK to negatively regulate the Ras/MAPK signaling pathway by stabilizing the transcriptional repressor ttk and consequently inhibiting photoreceptor cell development. This suggests that at least during eye development, it may act in both the positive and negative regulation of the Ras/MAPK signaling pathway to mediate the development of different cell types. Positively regulates border follicle cell migration during oogenesis by mediating the deubiquitination and stabilization of slbo. In the wing disks it positively regulates wg signaling by stabilizing arm. Has an effect on position-effect variegation. The chain is Ubiquitin carboxyl-terminal hydrolase 47 from Drosophila melanogaster (Fruit fly).